The sequence spans 502 residues: ATP synthase subunit alpha (502 aa).

ATP is bound at residue 169 to 176; it reads GDRQTGKT.

This sequence belongs to the ATPase alpha/beta chains family. As to quaternary structure, F-type ATPases have 2 components, CF(1) - the catalytic core - and CF(0) - the membrane proton channel. CF(1) has five subunits: alpha(3), beta(3), gamma(1), delta(1), epsilon(1). CF(0) has three main subunits: a(1), b(2) and c(9-12). The alpha and beta chains form an alternating ring which encloses part of the gamma chain. CF(1) is attached to CF(0) by a central stalk formed by the gamma and epsilon chains, while a peripheral stalk is formed by the delta and b chains.

It localises to the cell membrane. It carries out the reaction ATP + H2O + 4 H(+)(in) = ADP + phosphate + 5 H(+)(out). In terms of biological role, produces ATP from ADP in the presence of a proton gradient across the membrane. The alpha chain is a regulatory subunit. This is ATP synthase subunit alpha from Desulfitobacterium hafniense (strain DSM 10664 / DCB-2).